A 139-amino-acid chain; its full sequence is Putative pre-16S rRNA nuclease (139 aa).

It belongs to the YqgF nuclease family.

Its subcellular location is the cytoplasm. Its function is as follows. Could be a nuclease involved in processing of the 5'-end of pre-16S rRNA. This chain is Putative pre-16S rRNA nuclease, found in Streptococcus gordonii (strain Challis / ATCC 35105 / BCRC 15272 / CH1 / DL1 / V288).